The following is a 717-amino-acid chain: Fatty acid oxidation complex subunit alpha (717 aa).

An enoyl-CoA hydratase/isomerase region spans residues 1–190 (MIHAGNAITV…KDGAVDAVVA (190 aa)). Aspartate 298 provides a ligand contact to substrate. The tract at residues 313–717 (HPVNQAAVLG…MAANNKKFYG (405 aa)) is 3-hydroxyacyl-CoA dehydrogenase. NAD(+)-binding positions include methionine 326, aspartate 345, 402–404 (VTE), lysine 409, and serine 431. Histidine 452 (for 3-hydroxyacyl-CoA dehydrogenase activity) is an active-site residue. Asparagine 455 serves as a coordination point for NAD(+). Residue asparagine 502 coordinates substrate.

It in the N-terminal section; belongs to the enoyl-CoA hydratase/isomerase family. The protein in the C-terminal section; belongs to the 3-hydroxyacyl-CoA dehydrogenase family. In terms of assembly, heterotetramer of two alpha chains (FadB) and two beta chains (FadA).

It carries out the reaction a (3S)-3-hydroxyacyl-CoA + NAD(+) = a 3-oxoacyl-CoA + NADH + H(+). It catalyses the reaction a (3S)-3-hydroxyacyl-CoA = a (2E)-enoyl-CoA + H2O. The catalysed reaction is a 4-saturated-(3S)-3-hydroxyacyl-CoA = a (3E)-enoyl-CoA + H2O. The enzyme catalyses (3S)-3-hydroxybutanoyl-CoA = (3R)-3-hydroxybutanoyl-CoA. It carries out the reaction a (3Z)-enoyl-CoA = a 4-saturated (2E)-enoyl-CoA. It catalyses the reaction a (3E)-enoyl-CoA = a 4-saturated (2E)-enoyl-CoA. Its pathway is lipid metabolism; fatty acid beta-oxidation. Its function is as follows. Involved in the aerobic and anaerobic degradation of long-chain fatty acids via beta-oxidation cycle. Catalyzes the formation of 3-oxoacyl-CoA from enoyl-CoA via L-3-hydroxyacyl-CoA. It can also use D-3-hydroxyacyl-CoA and cis-3-enoyl-CoA as substrate. The protein is Fatty acid oxidation complex subunit alpha of Acinetobacter baumannii (strain SDF).